We begin with the raw amino-acid sequence, 185 residues long: MSETPSTPTVPAGPEPGPISRWLNKQGFEHQLLDPDHLGVEVIGVESMFLQVIVAALKADGFDYLQCQGGYDEGPGQQLVCFYHLVAMAEMVAKMGVGDSSSEAAKVREVRLKVFLSREDTPSLPSIYGLFRGADWQERETFDMFGINFEGHPHPKRLLMPEDWKGWPLRKDYVQPDFYEMQDAY.

It belongs to the complex I 30 kDa subunit family. As to quaternary structure, NDH-1 can be composed of about 15 different subunits; different subcomplexes with different compositions have been identified which probably have different functions.

The protein localises to the cellular thylakoid membrane. It carries out the reaction a plastoquinone + NADH + (n+1) H(+)(in) = a plastoquinol + NAD(+) + n H(+)(out). It catalyses the reaction a plastoquinone + NADPH + (n+1) H(+)(in) = a plastoquinol + NADP(+) + n H(+)(out). NDH-1 shuttles electrons from an unknown electron donor, via FMN and iron-sulfur (Fe-S) centers, to quinones in the respiratory and/or the photosynthetic chain. The immediate electron acceptor for the enzyme in this species is believed to be plastoquinone. Couples the redox reaction to proton translocation, and thus conserves the redox energy in a proton gradient. Cyanobacterial NDH-1 also plays a role in inorganic carbon-concentration. In Prochlorococcus marinus (strain MIT 9303), this protein is NAD(P)H-quinone oxidoreductase subunit J.